The primary structure comprises 182 residues: Large ribosomal subunit protein uL5 (182 aa).

Belongs to the universal ribosomal protein uL5 family. As to quaternary structure, part of the 50S ribosomal subunit; part of the 5S rRNA/L5/L18/L25 subcomplex. Contacts the 5S rRNA and the P site tRNA. Forms a bridge to the 30S subunit in the 70S ribosome.

Functionally, this is one of the proteins that bind and probably mediate the attachment of the 5S RNA into the large ribosomal subunit, where it forms part of the central protuberance. In the 70S ribosome it contacts protein S13 of the 30S subunit (bridge B1b), connecting the 2 subunits; this bridge is implicated in subunit movement. Contacts the P site tRNA; the 5S rRNA and some of its associated proteins might help stabilize positioning of ribosome-bound tRNAs. The chain is Large ribosomal subunit protein uL5 from Mycoplasma mobile (strain ATCC 43663 / 163K / NCTC 11711) (Mesomycoplasma mobile).